Reading from the N-terminus, the 434-residue chain is UDP-N-acetylmuramoylalanine--D-glutamate ligase (434 aa).

117-123 serves as a coordination point for ATP; sequence GTNGKST.

This sequence belongs to the MurCDEF family.

It localises to the cytoplasm. The enzyme catalyses UDP-N-acetyl-alpha-D-muramoyl-L-alanine + D-glutamate + ATP = UDP-N-acetyl-alpha-D-muramoyl-L-alanyl-D-glutamate + ADP + phosphate + H(+). It functions in the pathway cell wall biogenesis; peptidoglycan biosynthesis. In terms of biological role, cell wall formation. Catalyzes the addition of glutamate to the nucleotide precursor UDP-N-acetylmuramoyl-L-alanine (UMA). This chain is UDP-N-acetylmuramoylalanine--D-glutamate ligase, found in Sphingopyxis alaskensis (strain DSM 13593 / LMG 18877 / RB2256) (Sphingomonas alaskensis).